The primary structure comprises 137 residues: Dormancy-associated protein homolog 3 (137 aa).

2 disordered regions span residues 1–55 (MGLL…DSLP) and 69–137 (KPPG…TYGM). Polar residues predominate over residues 32 to 43 (FRPSSGNDQSEA). The segment covering 70-87 (PPGYQGSSAPASPAGSTP) has biased composition (low complexity). At Ser81 the chain carries Phosphoserine. The segment covering 88-97 (PLSPFSPPLS) has biased composition (pro residues). Residues 104–118 (EPFRFRRRSTSDAFE) show a composition bias toward basic and acidic residues. The segment covering 127–137 (GPRSSPPTYGM) has biased composition (polar residues).

The protein belongs to the DRM1/ARP family.

The chain is Dormancy-associated protein homolog 3 from Arabidopsis thaliana (Mouse-ear cress).